The following is a 229-amino-acid chain: MKQVRLPSSATVRAACAVAVAALAGCAQIPRDPIIQQPMTAQPPMPMSMQAPGSIYNPGYAGRPLFEDQRPRNIGDILTIMIAENINATKSSGANTNRQGNTDFNVPTAGFLGGLFAKANLSATGANKFAATGGASAANTFNGTITVTVTNVLPNGNLVVSGEKQMLINQGNEFVRFSGVVNPNTISGANSVYSTQVADAKIEYSSKGYINEAETMGWLQRFFLNIAPW.

An N-terminal signal peptide occupies residues 1-25 (MKQVRLPSSATVRAACAVAVAALAG). Cys26 carries N-palmitoyl cysteine lipidation. The S-diacylglycerol cysteine moiety is linked to residue Cys26.

The protein belongs to the FlgH family. As to quaternary structure, the basal body constitutes a major portion of the flagellar organelle and consists of four rings (L,P,S, and M) mounted on a central rod.

The protein localises to the cell outer membrane. Its subcellular location is the bacterial flagellum basal body. Its function is as follows. Assembles around the rod to form the L-ring and probably protects the motor/basal body from shearing forces during rotation. This chain is Flagellar L-ring protein, found in Burkholderia orbicola (strain AU 1054).